Reading from the N-terminus, the 65-residue chain is MPKMKTHRGAAKRFRKTGTGKLKRGKAFRSHILTKKSSKTKRHLRKAGYVSDSQLKVMKKLLPYL.

A disordered region spans residues 1–26 (MPKMKTHRGAAKRFRKTGTGKLKRGK).

Belongs to the bacterial ribosomal protein bL35 family.

The polypeptide is Large ribosomal subunit protein bL35 (Clostridium beijerinckii (strain ATCC 51743 / NCIMB 8052) (Clostridium acetobutylicum)).